The chain runs to 161 residues: Cell wall protein YLR042C (161 aa).

Positions 1–24 (MKISQFGSLAFAPIVLLQLFIVQA) are cleaved as a signal peptide. N77, N104, and N120 each carry an N-linked (GlcNAc...) asparagine glycan. Residues 111–139 (FTPLPSSSRNETKSSQTTNTISSSTSTGG) form a disordered region. Residues 123-137 (KSSQTTNTISSSTST) are compositionally biased toward low complexity. Residue G139 is the site of GPI-anchor amidated glycine attachment. Positions 140–161 (VGSVKPCLYFVLMLETIAYLFS) are cleaved as a propeptide — removed in mature form.

The GPI-anchor is attached to the protein in the endoplasmic reticulum and serves to target the protein to the cell surface. There, the glucosamine-inositol phospholipid moiety is cleaved off and the GPI-modified mannoprotein is covalently attached via its lipidless GPI glycan remnant to the 1,6-beta-glucan of the outer cell wall layer.

It is found in the secreted. Its subcellular location is the cell wall. The protein localises to the membrane. This is Cell wall protein YLR042C from Saccharomyces cerevisiae (strain ATCC 204508 / S288c) (Baker's yeast).